Here is a 464-residue protein sequence, read N- to C-terminus: UDP-glycosyltransferase 83A1 (464 aa).

UDP-alpha-D-glucose contacts are provided by residues Ser-295, 341-343, 358-366, and 380-383; these read APQ, HCGWNSTLE, and FADQ.

The protein belongs to the UDP-glycosyltransferase family.

The protein is UDP-glycosyltransferase 83A1 (UGT83A1) of Arabidopsis thaliana (Mouse-ear cress).